The sequence spans 308 residues: Homogentisate phytyltransferase (308 aa).

Helical transmembrane passes span 13–33 (PHTIIGTTLSVWAVYLLTILG), 44–64 (LDLVFGAWLACLLGNVYIVGL), 104–124 (LAIAWGLGLWLGLTVGISLII), 142–162 (AALCILTVRGIVVNLGLFLFF), 173–193 (ITPIWVLTLFILVFTVAIAIF), 219–241 (VFRGTLILLTGCYLAMAIWGLWA), 245–263 (LNTAFLIVSHLCLLALLWW), and 279–299 (FYQFIWKLFFLEYLLYPLALW).

The protein belongs to the UbiA prenyltransferase family.

It is found in the membrane. It catalyses the reaction phytyl diphosphate + homogentisate + H(+) = 2-methyl-6-phytyl-1,4-benzene-1,4-diol + CO2 + diphosphate. It functions in the pathway cofactor biosynthesis; tocopherol biosynthesis. Functionally, involved in the synthesis of tocopherol (vitamin E). Catalyzes the condensation of homogentisate and phytyl diphosphate to form dimethylphytylhydrquinone. This chain is Homogentisate phytyltransferase, found in Synechocystis sp. (strain ATCC 27184 / PCC 6803 / Kazusa).